A 323-amino-acid chain; its full sequence is MSNLTLSQFLQQEKGNLTPELAQVIDTIAATCKTIDQALQKGALAGILGSAGNENVQGETQKKLDVISNDYLIDALKVHPHVGGLASEELDDFTLAQENGEYLVLFDPLDGSSNIDINMCVGTIFSILPAKNAVTQAQDFMQAGTQQVAAGYVLYGPSTMMALTVGNGVAFFTLDPETQTFLLTTENVQVSADTQEFAINASNQRHWEQPVKQYIEELLAGKTSVREKDFNMRWVACMVGDVHRILCRGGIFLYPYDLKDPKKAGRLRLMYEANPMSMLIEQAGGASTTGRVRILEIEPTELHQRVPVIIGSKNEVERVTSYH.

Mg(2+) is bound by residues E88, D107, L109, and D110. Residues 110–113 (DGSS) and N200 each bind substrate. Mg(2+) is bound at residue E272.

This sequence belongs to the FBPase class 1 family. In terms of assembly, homotetramer. Requires Mg(2+) as cofactor.

The protein localises to the cytoplasm. The catalysed reaction is beta-D-fructose 1,6-bisphosphate + H2O = beta-D-fructose 6-phosphate + phosphate. It functions in the pathway carbohydrate biosynthesis; gluconeogenesis. The polypeptide is Fructose-1,6-bisphosphatase class 1 (Acinetobacter baumannii (strain ATCC 17978 / DSM 105126 / CIP 53.77 / LMG 1025 / NCDC KC755 / 5377)).